Consider the following 451-residue polypeptide: Tubulin alpha-2 chain (451 aa).

8 residues coordinate GTP: Gln-12, Asp-73, Ser-142, Gly-146, Thr-147, Thr-181, Asn-208, and Asn-230. Residue Asp-73 participates in Mg(2+) binding. The active site involves Glu-256.

Belongs to the tubulin family. As to quaternary structure, dimer of alpha and beta chains. A typical microtubule is a hollow water-filled tube with an outer diameter of 25 nm and an inner diameter of 15 nM. Alpha-beta heterodimers associate head-to-tail to form protofilaments running lengthwise along the microtubule wall with the beta-tubulin subunit facing the microtubule plus end conferring a structural polarity. Microtubules usually have 13 protofilaments but different protofilament numbers can be found in some organisms and specialized cells. It depends on Mg(2+) as a cofactor.

It localises to the cytoplasm. Its subcellular location is the cytoskeleton. The enzyme catalyses GTP + H2O = GDP + phosphate + H(+). In terms of biological role, tubulin is the major constituent of microtubules, a cylinder consisting of laterally associated linear protofilaments composed of alpha- and beta-tubulin heterodimers. Microtubules grow by the addition of GTP-tubulin dimers to the microtubule end, where a stabilizing cap forms. Below the cap, tubulin dimers are in GDP-bound state, owing to GTPase activity of alpha-tubulin. In Emericella nidulans (strain FGSC A4 / ATCC 38163 / CBS 112.46 / NRRL 194 / M139) (Aspergillus nidulans), this protein is Tubulin alpha-2 chain (tubB).